Consider the following 190-residue polypeptide: MTTSATGKALNRKQRRALNRSNRLRKEFQPVIVEPLASGQAVSLKTRTGYCVTQFVSNNPEVKAKEVVSVSVKLPDHLAVEANRALKVGRISILLGLLPTVAGTVKVCLTEKQDSPAESFKRALAVADSSKEVASAFYVDGFKDVSLGDLEKDLSIYLYSEAALAANSIRIRMEVEHVMPKFITRFSPFA.

Positions 1–20 (MTTSATGKALNRKQRRALNR) are disordered.

The protein belongs to the bromovirus capsid protein family.

The protein localises to the virion. Functionally, capsid protein. Probably binds RNA and plays a role in packaging. The protein is Capsid protein of Broad bean mottle virus.